Reading from the N-terminus, the 481-residue chain is Tryptophan 5-hydroxylase (481 aa).

One can recognise an ACT domain in the interval 56-131 (SVIFSLKNEI…NVISMSPPEN (76 aa)). L-tryptophan-binding residues include tyrosine 272, arginine 294, and threonine 302. Positions 309, 314, and 354 each coordinate Fe cation. The L-tryptophan site is built by serine 373 and isoleucine 403.

Belongs to the biopterin-dependent aromatic amino acid hydroxylase family. In terms of assembly, homotetramer. It depends on Fe(2+) as a cofactor.

The catalysed reaction is (6R)-L-erythro-5,6,7,8-tetrahydrobiopterin + L-tryptophan + O2 = 5-hydroxy-L-tryptophan + (4aS,6R)-4a-hydroxy-L-erythro-5,6,7,8-tetrahydrobiopterin. It participates in aromatic compound metabolism; serotonin biosynthesis; serotonin from L-tryptophan: step 1/2. Oxidizes L-tryptophan to 5-hydroxy-l-tryptophan in the rate-determining step of serotonin biosynthesis. The chain is Tryptophan 5-hydroxylase (tph1) from Xenopus laevis (African clawed frog).